We begin with the raw amino-acid sequence, 428 residues long: MFKFYPSDFFHFEFLRVLASAPAGGAETGECLAVLPQVPDGDAEAWYRAWTAQAQQARGLGDEALVSGDTVAASGAYLRASNYFRASEFFLHTRPDDPRLLAAMENSVAVFDKGVDLLDTCTVVRVEIPYEEEKGAARLPGRLYLPRSGAAQTGQGQSEDKLPLLIMTGGFDSTQEELYFFGPAAALPRGYAVLTFEGPGQGICLRRDGLRLRPDWEHVTTKVLDVVESQLAKDYPIDLERVAVVGASLGGYFALRAAADPRVRACVSCDACYDLFDVTRSRMPGWFINGWLSRRLSDGFFNWVVNKLAGWSFQLRWEFGHSMWVYGVESPAEVMRCMQQYHARGYLQKVKCSTFVTGAADTFYFTPKQNTEPIFEALGHVPLQKKRLWIGKGVEGGGLQAKIGAWAVFHQKMFVWLDEQFEIKRGTI.

Residue serine 248 is part of the active site.

It belongs to the AB hydrolase superfamily. FUS2 hydrolase family.

It functions in the pathway secondary metabolite biosynthesis. Hydrolase; part of the cluster that mediates the biosynthesis of acurin A, a highly reduced polyketide coupled to a serine via a peptide bond. The activities of the highly reducing polyketide synthase acrA and the nonribosomal peptide synthetase acrB are collectively responsible for the synthesis of the acurin A core structure with a heptaketide backbone produced by acrA covalently fused to a L-serine by acrB. After the formation of the PK-NRP hybrid product, it is detached from acrB by reductive release to set up the formation of the lactam ring by aldol condensation. The hydrolyase acrC then catalyzes water loss to generate a double bond in the ring. This double bond is probably reduced, which is followed by three oxidations at C-22 to generate the carboxylic acid moiety, involving probably the FAD-binding monooxygenase acrE and the cytochrome P450 monooxygenases acrD and acrF. Finally, a last methylation step performed by the O-methyltransferase acrG leads to the production of acurin A. The protein is Hydrolase acrC of Aspergillus aculeatus (strain ATCC 16872 / CBS 172.66 / WB 5094).